Reading from the N-terminus, the 337-residue chain is Fructose-1,6-bisphosphatase class 1 (337 aa).

Glutamate 94, aspartate 116, leucine 118, and aspartate 119 together coordinate Mg(2+). Residues 119 to 122 (DGSS), asparagine 210, and lysine 276 contribute to the substrate site. Glutamate 282 serves as a coordination point for Mg(2+).

The protein belongs to the FBPase class 1 family. In terms of assembly, homotetramer. Requires Mg(2+) as cofactor.

It is found in the cytoplasm. It catalyses the reaction beta-D-fructose 1,6-bisphosphate + H2O = beta-D-fructose 6-phosphate + phosphate. The protein operates within carbohydrate biosynthesis; gluconeogenesis. The protein is Fructose-1,6-bisphosphatase class 1 of Burkholderia vietnamiensis (strain G4 / LMG 22486) (Burkholderia cepacia (strain R1808)).